A 592-amino-acid polypeptide reads, in one-letter code: BRCA1-associated protein (592 aa).

S52 is subject to Phosphoserine. The tract at residues 78 to 124 is disordered; it reads KSNPDELKTTVEERKSSEASPTAQRSKDHSKECINAAPDSPSKQLPD. Basic and acidic residues predominate over residues 80 to 94; that stretch reads NPDELKTTVEERKSS. Phosphoserine occurs at positions 97, 117, and 119. The RING-type zinc-finger motif lies at 264 to 304; it reads CTVCLERMDESVNGILTTLCNHSFHSQCLQRWDDTTCPVCR. A UBP-type; degenerate zinc finger spans residues 301–393; that stretch reads PVCRYCQTPE…GKIVQYECEG (93 aa). 8 residues coordinate Zn(2+): C317, C320, C329, C332, C337, H344, H348, and H354. Residues 429-537 are a coiled coil; the sequence is RIEKDTAEEI…EIQEQLRDVM (109 aa). The disordered stretch occupies residues 565–592; it reads AMASASSPASSGGSGKLPSRKGRSKRGK. Over residues 582–592 the composition is skewed to basic residues; that stretch reads PSRKGRSKRGK.

As to quaternary structure, interacts with the nuclear localization signal of BRCA1 and with the N-terminal of KSR1. The C-terminal portion of BCRA1 interacts with DDB1. Expressed in breast epithelial cell lines.

The protein localises to the cytoplasm. It catalyses the reaction S-ubiquitinyl-[E2 ubiquitin-conjugating enzyme]-L-cysteine + [acceptor protein]-L-lysine = [E2 ubiquitin-conjugating enzyme]-L-cysteine + N(6)-ubiquitinyl-[acceptor protein]-L-lysine.. It participates in protein modification; protein ubiquitination. Its function is as follows. Negatively regulates MAP kinase activation by limiting the formation of Raf/MEK complexes probably by inactivation of the KSR1 scaffold protein. Also acts as a Ras responsive E3 ubiquitin ligase that, on activation of Ras, is modified by auto-polyubiquitination resulting in the release of inhibition of Raf/MEK complex formation. May also act as a cytoplasmic retention protein with a role in regulating nuclear transport. This is BRCA1-associated protein from Homo sapiens (Human).